Reading from the N-terminus, the 304-residue chain is Glycine--tRNA ligase alpha subunit (304 aa).

It belongs to the class-II aminoacyl-tRNA synthetase family. As to quaternary structure, tetramer of two alpha and two beta subunits.

Its subcellular location is the cytoplasm. It carries out the reaction tRNA(Gly) + glycine + ATP = glycyl-tRNA(Gly) + AMP + diphosphate. In Tolumonas auensis (strain DSM 9187 / NBRC 110442 / TA 4), this protein is Glycine--tRNA ligase alpha subunit.